A 129-amino-acid polypeptide reads, in one-letter code: Protein HMF1 (129 aa).

K52 participates in a covalent cross-link: Glycyl lysine isopeptide (Lys-Gly) (interchain with G-Cter in ubiquitin).

It belongs to the RutC family.

Its subcellular location is the cytoplasm. It is found in the nucleus. The protein localises to the mitochondrion intermembrane space. The sequence is that of Protein HMF1 (HMF1) from Saccharomyces cerevisiae (strain ATCC 204508 / S288c) (Baker's yeast).